A 663-amino-acid chain; its full sequence is Probable serine/threonine-protein kinase DDB_G0283301 (663 aa).

One can recognise a Protein kinase domain in the interval 312 to 586 (IERRNELGRG…EECVERLITL (275 aa)). ATP contacts are provided by residues 318 to 326 (LGRGGNGTV) and Lys-348. The active-site Proton acceptor is the Asp-440.

The protein belongs to the protein kinase superfamily. Ser/Thr protein kinase family.

It carries out the reaction L-seryl-[protein] + ATP = O-phospho-L-seryl-[protein] + ADP + H(+). It catalyses the reaction L-threonyl-[protein] + ATP = O-phospho-L-threonyl-[protein] + ADP + H(+). The sequence is that of Probable serine/threonine-protein kinase DDB_G0283301 from Dictyostelium discoideum (Social amoeba).